A 475-amino-acid chain; its full sequence is Na(+)/H(+) antiporter NhaA 2 (475 aa).

12 consecutive transmembrane segments (helical) span residues 44-64 (AQATASVFLLVATITALWWAN), 92-112 (LKHIINDGLMVIFFFFIGLEI), 130-150 (LILCALGGMICPAVIYSLFNW), 156-176 (IGWGIPMATDTAFALGALTLV), 186-206 (AFLVGLAIVDDVGAIVVIALF), 211-231 (ISVIFLSISFSLIAFLAIANY), 232-252 (AGVLRPIFYILIGIAAWWTML), 255-275 (GVHPTFAGVAIALTVPARPML), 331-351 (ALDLPVSLFVLPLFALVNAGV), 368-388 (LGIVIGLVIGKFVGISGACWL), 406-426 (VIGMSLIAGIGFTMSTFIATL), and 442-462 (ILFASLLSAILGLLYLRIIAA).

It belongs to the NhaA Na(+)/H(+) (TC 2.A.33) antiporter family.

The protein resides in the cell inner membrane. It carries out the reaction Na(+)(in) + 2 H(+)(out) = Na(+)(out) + 2 H(+)(in). Its function is as follows. Na(+)/H(+) antiporter that extrudes sodium in exchange for external protons. This is Na(+)/H(+) antiporter NhaA 2 from Psychromonas ingrahamii (strain DSM 17664 / CCUG 51855 / 37).